The chain runs to 445 residues: Elongation factor 1-alpha (445 aa).

The tr-type G domain maps to 5-230 (KVHISLVVIG…DNLEPPKRPS (226 aa)). The tract at residues 14–21 (GHVDSGKS) is G1. Residue 14 to 21 (GHVDSGKS) participates in GTP binding. Lys55 bears the N6,N6-dimethyllysine mark. The interval 70 to 74 (CITID) is G2. Lys79 bears the N6,N6,N6-trimethyllysine mark. Positions 91 to 94 (DAPG) are G3. GTP-binding positions include 91–95 (DAPGH) and 153–156 (NKFD). A G4 region spans residues 153–156 (NKFD). Lys187 carries the post-translational modification N6,N6,N6-trimethyllysine. The interval 194 to 196 (SGW) is G5. The residue at position 261 (Lys261) is an N6-methyllysine. N6,N6,N6-trimethyllysine occurs at positions 306 and 396.

The protein belongs to the TRAFAC class translation factor GTPase superfamily. Classic translation factor GTPase family. EF-Tu/EF-1A subfamily.

Its subcellular location is the cytoplasm. This protein promotes the GTP-dependent binding of aminoacyl-tRNA to the A-site of ribosomes during protein biosynthesis. This chain is Elongation factor 1-alpha (TEF), found in Euglena gracilis.